The primary structure comprises 211 residues: MRLRKKWWARPEMEASSLVITNPKEYKGKWMEEFKNNNSIHLELGCGRGGFMQEKALKNPNINYVAVDLKDEILIYVLRKLKEKEIENVRIVPLNIAFISEVFEKDEIEKIYINFCNPWPKLRHNKRRLTHNKFLDEYKKFLKGQGEIWFKTDDIGLFEDSQEYFKESGFSIEYITYDLHKSDFKDNIMTEYETKFTSMGMKTMFLIAKLK.

S-adenosyl-L-methionine-binding residues include Glu-43, Asp-68, Asn-95, and Asn-117. Lys-121 provides a ligand contact to substrate. The interaction with RNA stretch occupies residues 123–128; that stretch reads RHNKRR. Residues Asp-153 and 190 to 193 each bind substrate; that span reads TEYE.

Belongs to the class I-like SAM-binding methyltransferase superfamily. TrmB family.

The enzyme catalyses guanosine(46) in tRNA + S-adenosyl-L-methionine = N(7)-methylguanosine(46) in tRNA + S-adenosyl-L-homocysteine. It functions in the pathway tRNA modification; N(7)-methylguanine-tRNA biosynthesis. Functionally, catalyzes the formation of N(7)-methylguanine at position 46 (m7G46) in tRNA. This Clostridium tetani (strain Massachusetts / E88) protein is tRNA (guanine-N(7)-)-methyltransferase.